Here is a 486-residue protein sequence, read N- to C-terminus: Protein DETOXIFICATION 27 (486 aa).

The tract at residues 1–25 is disordered; the sequence is MRGGDGEEGSESRVALLKSPHTAEE. Helical transmembrane passes span 41-61, 74-94, 124-144, 153-173, 189-209, 216-236, 269-289, 299-319, 349-369, 384-404, 407-427, and 439-461; these read LWQIVGPAIFSRVTTYSMLVI, LAAISIVNNVTVGFNFGLLLG, IVLFFCCVLLLPTYIFTTPVL, IAELSGVVAIWVIPLHFAFTL, VTAYAAAVALVVHILVCWLFV, VVGTVATISISWWVNVLILLV, GVMLCLENWYYRILIIMTGNL, LSICMAINGWEMMIPLAFFAG, IIGLFFWVLIMLLHNQIAWIF, LLLAFTVLLNSVQPVLSGVAV, GWQSYVAYINLGCYYCIGVPL, and VMGIWGGMIFGGTAVQTMILSFI.

This sequence belongs to the multi antimicrobial extrusion (MATE) (TC 2.A.66.1) family.

Its subcellular location is the membrane. This Arabidopsis thaliana (Mouse-ear cress) protein is Protein DETOXIFICATION 27.